Reading from the N-terminus, the 176-residue chain is Large ribosomal subunit protein uL6 (176 aa).

It belongs to the universal ribosomal protein uL6 family. As to quaternary structure, part of the 50S ribosomal subunit.

In terms of biological role, this protein binds to the 23S rRNA, and is important in its secondary structure. It is located near the subunit interface in the base of the L7/L12 stalk, and near the tRNA binding site of the peptidyltransferase center. The protein is Large ribosomal subunit protein uL6 of Paraburkholderia phytofirmans (strain DSM 17436 / LMG 22146 / PsJN) (Burkholderia phytofirmans).